We begin with the raw amino-acid sequence, 213 residues long: Thiopurine S-methyltransferase (213 aa).

Trp10, Leu45, Glu66, and Arg121 together coordinate S-adenosyl-L-methionine.

Belongs to the class I-like SAM-binding methyltransferase superfamily. TPMT family.

The protein resides in the cytoplasm. The enzyme catalyses S-adenosyl-L-methionine + a thiopurine = S-adenosyl-L-homocysteine + a thiopurine S-methylether.. The sequence is that of Thiopurine S-methyltransferase from Aliivibrio salmonicida (strain LFI1238) (Vibrio salmonicida (strain LFI1238)).